Reading from the N-terminus, the 251-residue chain is uncharacterized protein (251 aa).

Residues 1–18 form the signal peptide; it reads MRILIILSIILCSLSIRA.

The protein belongs to the MlaA family.

This is an uncharacterized protein from Rickettsia conorii (strain ATCC VR-613 / Malish 7).